The chain runs to 206 residues: Guanylyl cyclase inhibitory protein (206 aa).

Residue glycine 2 is the site of N-myristoyl glycine attachment. 4 EF-hand domains span residues 31–49, 51–86, 87–122, and 135–170; these read SGLI…VTVG, NSSE…LAHG, TPED…VYKM, and TAEE…DEWV. Residues aspartate 64, asparagine 66, aspartate 68, glutamate 75, aspartate 100, aspartate 102, aspartate 104, and glutamate 111 each contribute to the Ca(2+) site.

As to expression, retina; inner segments, somata and synaptic terminals of cone receptors.

Its function is as follows. Does not stimulate guanylyl cyclase (GC) when free calcium ion concentration is low, but inhibits GC when free calcium ions concentration is elevated. In Lithobates pipiens (Northern leopard frog), this protein is Guanylyl cyclase inhibitory protein (GCIP).